We begin with the raw amino-acid sequence, 113 residues long: C-X-C motif chemokine 6 (113 aa).

The first 36 residues, 1–36 (MSLLPSRAARVPGPSSSLCALLALLLLTPPGPLVSA), serve as a signal peptide directing secretion. Disulfide bonds link Cys-48/Cys-74 and Cys-50/Cys-90.

It belongs to the intercrine alpha (chemokine CxC) family.

It localises to the secreted. In terms of biological role, chemotactic for neutrophil granulocytes. Signals through binding and activation of its receptors (CXCR1 and CXCR2). In addition to its chemotactic and angiogenic properties, it has strong antibacterial activity against Gram-positive and Gram-negative bacteria (90-fold-higher when compared to CXCL5 and CXCL7). In Equus caballus (Horse), this protein is C-X-C motif chemokine 6 (CXCL6).